The primary structure comprises 2856 residues: Lipopolysaccharide-responsive and beige-like anchor protein (2856 aa).

Disordered regions lie at residues 1-35 and 939-1107; these read MASE…ALSL and EQRK…DDDY. A2 bears the N-acetylalanine mark. 3 positions are modified to phosphoserine: S10, S979, and S1003. The segment covering 991–1009 has biased composition (polar residues); the sequence is ENSSIGRASSIDSASNTEL. A compositionally biased stretch (basic and acidic residues) spans 1010–1026; it reads QTHDMSSDEKKVERENQ. The span at 1073-1082 shows a compositional bias: low complexity; the sequence is SEVSASISSP. Phosphoserine occurs at positions 1097, 1132, 1136, 1219, 1221, 1228, 1244, and 1258. Residues 1253 to 1296 are disordered; sequence FELKASTSTEAPQPQRHGLEISRQQEQTAQGTAPDAVDQQRRDS. Residues 1274-1283 are compositionally biased toward polar residues; that stretch reads SRQQEQTAQG. The stretch at 1298-1340 is one WD 1 repeat; it reads STMFRIPEFKWSQMHQRLLTDLLFSIETDIQMWRSHSTKTVMD. Phosphoserine is present on residues S1487 and S1497. Residues 1529 to 1545 form a helical membrane-spanning segment; the sequence is AQFLALAVVYFISVLMV. Disordered stretches follow at residues 1556 to 1621 and 1750 to 1778; these read DERH…LGSG and SAVS…SPKC. A compositionally biased stretch (polar residues) spans 1563-1573; the sequence is LKETSSDNGNA. A compositionally biased stretch (low complexity) spans 1586–1601; that stretch reads SSLTLSSVEESLEGTS. Phosphoserine is present on residues S1608, S1770, S1773, and S2057. Residues 2066–2174 form the BEACH-type PH domain; that stretch reads NLAGPVSLST…TVKKVVNYLP (109 aa). Residues 2193–2482 enclose the BEACH domain; the sequence is ATPRQLFKAS…QLLIEPHPPR (290 aa). S2489 carries the post-translational modification Phosphoserine. WD repeat units lie at residues 2584-2626, 2629-2672, 2688-2728, 2770-2809, and 2812-2851; these read DQSI…LIQV, GHWD…SGIG, GHDY…RTLE, ETDD…QLFA, and GCDA…WHHE.

As to quaternary structure, interacts with TOM1 and TOLLIP. In terms of tissue distribution, isoform 1 is expressed in the brain, is absent from the lung and the bone marrow and is less abundant in the spleen. Isoform 2 is expressed in the spleen, lung, brain and bone marrow. Isoform 3 is expressed in the brain, is absent from the bone marrow and is less abundant in the spleen and lung.

The protein localises to the cell membrane. Its subcellular location is the endoplasmic reticulum membrane. The protein resides in the golgi apparatus. It localises to the trans-Golgi network membrane. It is found in the lysosome membrane. Functionally, involved in coupling signal transduction and vesicle trafficking to enable polarized secretion and/or membrane deposition of immune effector molecules. Involved in phagophore growth during mitophagy by regulating ATG9A trafficking to mitochondria. The sequence is that of Lipopolysaccharide-responsive and beige-like anchor protein (Lrba) from Mus musculus (Mouse).